The primary structure comprises 139 residues: Putative esterase PM0788 (139 aa).

The protein belongs to the thioesterase PaaI family.

The protein is Putative esterase PM0788 of Pasteurella multocida (strain Pm70).